A 20-amino-acid chain; its full sequence is IVGGTEVTPGEIPYQLSLQD.

The 20-residue stretch at 1-20 (IVGGTEVTPGEIPYQLSLQD) folds into the Peptidase S1 domain. The disordered stretch occupies residues 1–20 (IVGGTEVTPGEIPYQLSLQD).

Belongs to the peptidase S1 family.

It catalyses the reaction Hydrolysis of proteins, with broad specificity for peptide bonds. Native collagen is cleaved about 75% of the length of the molecule from the N-terminus. Low activity on small molecule substrates of both trypsin and chymotrypsin.. This enzyme is a serine protease capable of degrading the native triple helix of collagen. This Paralithodes camtschaticus (Red king crab) protein is Collagenolytic protease 36 kDa A.